Consider the following 327-residue polypeptide: uncharacterized protein (327 aa).

A signal peptide spans 1–23; sequence MGGGRLPPLWLPLLIAWSEWGNC. 2 N-linked (GlcNAc...) asparagine; by host glycosylation sites follow: Asn-144 and Asn-239. Residues 298 to 327 are disordered; that stretch reads EESEAAEETAAGEASAVAAAAVSEEEQRRE. The span at 305 to 319 shows a compositional bias: low complexity; that stretch reads ETAAGEASAVAAAAV.

This is an uncharacterized protein from Human cytomegalovirus (strain AD169) (HHV-5).